Here is a 968-residue protein sequence, read N- to C-terminus: RNA polymerase-associated protein RapA (968 aa).

One can recognise a Helicase ATP-binding domain in the interval 164 to 334 (DVGRRHAPRV…FARLRLLDPN (171 aa)). Residue 177-184 (DEVGLGKT) participates in ATP binding. Residues 280–283 (DEAH) carry the DEAH box motif. A Helicase C-terminal domain is found at 490 to 685 (RVEWLMGYLT…ALKAQLEQGR (196 aa)).

Belongs to the SNF2/RAD54 helicase family. RapA subfamily. As to quaternary structure, interacts with the RNAP. Has a higher affinity for the core RNAP than for the holoenzyme. Its ATPase activity is stimulated by binding to RNAP.

Transcription regulator that activates transcription by stimulating RNA polymerase (RNAP) recycling in case of stress conditions such as supercoiled DNA or high salt concentrations. Probably acts by releasing the RNAP, when it is trapped or immobilized on tightly supercoiled DNA. Does not activate transcription on linear DNA. Probably not involved in DNA repair. The chain is RNA polymerase-associated protein RapA from Salmonella typhi.